We begin with the raw amino-acid sequence, 228 residues long: Enolase-phosphatase E1 (228 aa).

Belongs to the HAD-like hydrolase superfamily. MasA/MtnC family. As to quaternary structure, monomer. It depends on Mg(2+) as a cofactor.

It carries out the reaction 5-methylsulfanyl-2,3-dioxopentyl phosphate + H2O = 1,2-dihydroxy-5-(methylsulfanyl)pent-1-en-3-one + phosphate. The protein operates within amino-acid biosynthesis; L-methionine biosynthesis via salvage pathway; L-methionine from S-methyl-5-thio-alpha-D-ribose 1-phosphate: step 3/6. Its pathway is amino-acid biosynthesis; L-methionine biosynthesis via salvage pathway; L-methionine from S-methyl-5-thio-alpha-D-ribose 1-phosphate: step 4/6. Bifunctional enzyme that catalyzes the enolization of 2,3-diketo-5-methylthiopentyl-1-phosphate (DK-MTP-1-P) into the intermediate 2-hydroxy-3-keto-5-methylthiopentenyl-1-phosphate (HK-MTPenyl-1-P), which is then dephosphorylated to form the acireductone 1,2-dihydroxy-3-keto-5-methylthiopentene (DHK-MTPene). This is Enolase-phosphatase E1 from Picosynechococcus sp. (strain ATCC 27264 / PCC 7002 / PR-6) (Agmenellum quadruplicatum).